Here is a 126-residue protein sequence, read N- to C-terminus: Glycine cleavage system H protein (126 aa).

The Lipoyl-binding domain occupies 22-103 (KAYIGITDYA…PYGSWMALVE (82 aa)). At Lys63 the chain carries N6-lipoyllysine.

Belongs to the GcvH family. The glycine cleavage system is composed of four proteins: P, T, L and H. (R)-lipoate serves as cofactor.

Its function is as follows. The glycine cleavage system catalyzes the degradation of glycine. The H protein shuttles the methylamine group of glycine from the P protein to the T protein. The sequence is that of Glycine cleavage system H protein from Thermoanaerobacter pseudethanolicus (strain ATCC 33223 / 39E) (Clostridium thermohydrosulfuricum).